The sequence spans 201 residues: ATP-dependent Clp protease proteolytic subunit 2 (201 aa).

Catalysis depends on Ser98, which acts as the Nucleophile. Residue His123 is part of the active site.

The protein belongs to the peptidase S14 family. In terms of assembly, fourteen ClpP subunits assemble into 2 heptameric rings which stack back to back to give a disk-like structure with a central cavity, resembling the structure of eukaryotic proteasomes.

The protein resides in the cytoplasm. The catalysed reaction is Hydrolysis of proteins to small peptides in the presence of ATP and magnesium. alpha-casein is the usual test substrate. In the absence of ATP, only oligopeptides shorter than five residues are hydrolyzed (such as succinyl-Leu-Tyr-|-NHMec, and Leu-Tyr-Leu-|-Tyr-Trp, in which cleavage of the -Tyr-|-Leu- and -Tyr-|-Trp bonds also occurs).. Its function is as follows. Cleaves peptides in various proteins in a process that requires ATP hydrolysis. Has a chymotrypsin-like activity. Plays a major role in the degradation of misfolded proteins. In Rhizobium johnstonii (strain DSM 114642 / LMG 32736 / 3841) (Rhizobium leguminosarum bv. viciae), this protein is ATP-dependent Clp protease proteolytic subunit 2.